Consider the following 618-residue polypeptide: Cytosolic Fe-S cluster assembly factor NAR1 (618 aa).

8 residues coordinate [4Fe-4S] cluster: cysteine 20, cysteine 61, cysteine 64, cysteine 67, cysteine 212, cysteine 267, cysteine 471, and cysteine 475. Disordered stretches follow at residues threonine 495 to glutamate 516 and serine 530 to arginine 560.

The protein belongs to the NARF family.

In terms of biological role, component of the cytosolic Fe/S protein assembly machinery. Required for maturation of extramitochondrial Fe/S proteins. May play a role in the transfer of pre-assembled Fe/S clusters to target apoproteins. This Coccidioides immitis (strain RS) (Valley fever fungus) protein is Cytosolic Fe-S cluster assembly factor NAR1 (NAR1).